Reading from the N-terminus, the 642-residue chain is Terminase, large subunit (642 aa).

Residues 1 to 48 (MISDAQKAANAAGAIATGLLSLIIPVPLTTVQWANKHYYLPKESSYTP) are interaction with the terminase small subunit. The Q motif motif lies at 42–51 (KESSYTPGRW). A Walker A motif motif is present at residues 76–83 (KSARVGYT). Residues 166–353 (NYREKSVDVV…LDALKDPNGL (188 aa)) form a DNA packaging/ATPase region. Positions 174 to 179 (VVCYDE) match the Walker B motif motif. The For ATPase activity role is filled by Glu-179. Asp-401 lines the Mg(2+) pocket. Positions 401 to 587 (DSQRNRFEMY…LWDNKKRRNE (187 aa)) are endonuclease. Position 491 to 498 (491 to 498 (GASVYGKP)) interacts with ATP. The segment at 574-585 (KMRLLWDNKKRR) is basic. The tract at residues 589 to 617 (LDCLVYAYAALRVSVQRWQLDLAVLAKSR) is leucine zipper. The segment at 611–642 (AVLAKSREEETTRPTLKELAAKLSGGVNGYSR) is prohead binding.

It belongs to the lambdavirus large terminase family. As to quaternary structure, heterotrimer of two small and one large terminase subunits. The catalytically competent terminase is composed of a tetramer of heterotrimers. The tetramer forms a ring structure large enough to encircle duplex DNA. Host IHFA/IHFB induces bending of viral DNA to facilitate the assembly of the terminase tetramer of heterotrimers. Interacts (via N-terminus) with the terminase small subunit (via C-terminus). Interacts (via C-terminus) with the portal protein; this interaction allows the packaging of viral DNA. It depends on Mg(2+) as a cofactor.

The protein resides in the host cytoplasm. The enzyme catalyses Endonucleolytic cleavage of DNA to give specific double-stranded fragments with terminal 5'-phosphates.. Functionally, the terminase large subunit acts as an ATP driven molecular motor necessary for viral DNA translocation into empty capsids and as an endonuclease that cuts the viral genome from the concetamer to initiate and to end the packaging reaction. The terminase lies at a unique vertex of the procapsid and is composed of two subunits, a small terminase subunit involved in viral DNA recognition (binding to packaging sequence cos), and a large terminase subunit possessing endonucleolytic and ATPase activities (DNA maturation and packaging). The terminase binds cooperatively with the host factor IHFA/IHFB to the cos site at the junction of adjacent viral genomes. The endonuclease activity cleaves the viral DNA generating 5'overhangs of 12 bp in length. The strand separation activity separates the cohesive ends generating the single-stranded 'sticky' ends of the mature genome. IHFA/IHFB is also necessary for the strand separation activity of the terminase. The terminase remains bound to the left end of the genome to be packaged, forming a stable DNA-terminase complex. In a reaction facilitated by the viral assembly catalyst gpFI, the DNA-terminase complex binds to the portal of the procapsid thereby activating the translocase activity of the terminase. The terminase packages the viral DNA into the procapsid until the next cos site on the concatemer reaches the complex. The downstream cos site is then cut generating the mature right end of the genome, the heterotrimer undocks from the DNA-filled head and remains bound to the left end of concatemer's next genome. The protein is Terminase, large subunit (2) of Escherichia coli (Bacteriophage 21).